The primary structure comprises 663 residues: Glucans biosynthesis glucosyltransferase H (663 aa).

The next 6 helical transmembrane spans lie at 64-86 (WMLG…DTIA), 101-123 (LAPL…VVLM), 413-435 (LVIG…AGLI), 470-492 (AWAM…ILVL), 558-580 (EAWA…FWFT), and 584-606 (LTAT…LGAH).

Belongs to the glycosyltransferase 2 family. OpgH subfamily.

It is found in the cell inner membrane. It participates in glycan metabolism; osmoregulated periplasmic glucan (OPG) biosynthesis. Involved in the biosynthesis of osmoregulated periplasmic glucans (OPGs). The chain is Glucans biosynthesis glucosyltransferase H from Caulobacter vibrioides (strain ATCC 19089 / CIP 103742 / CB 15) (Caulobacter crescentus).